Here is a 153-residue protein sequence, read N- to C-terminus: Cytochrome c-type biogenesis protein CcmE (153 aa).

Residues 1–7 (MTRKKRR) lie on the Cytoplasmic side of the membrane. Residues 8–28 (LYFVVLGMLALFAAAGLTLTA) traverse the membrane as a helical; Signal-anchor for type II membrane protein segment. At 29-153 (FQDNLVFFYS…PPTAAAAPAP (125 aa)) the chain is on the periplasmic side. Residues histidine 121 and tyrosine 125 each coordinate heme. The segment at 132 to 153 (ESLKASGKWQHGPPTAAAAPAP) is disordered. The segment covering 144-153 (PPTAAAAPAP) has biased composition (low complexity).

Belongs to the CcmE/CycJ family.

The protein localises to the cell inner membrane. Its function is as follows. Heme chaperone required for the biogenesis of c-type cytochromes. Transiently binds heme delivered by CcmC and transfers the heme to apo-cytochromes in a process facilitated by CcmF and CcmH. The chain is Cytochrome c-type biogenesis protein CcmE from Rhodospirillum rubrum (strain ATCC 11170 / ATH 1.1.1 / DSM 467 / LMG 4362 / NCIMB 8255 / S1).